The chain runs to 226 residues: Ribose-5-phosphate isomerase A (226 aa).

Substrate-binding positions include Thr-29 to Thr-32, Asp-84 to Asp-87, and Lys-97 to Gly-100. Glu-106 acts as the Proton acceptor in catalysis. Lys-124 is a substrate binding site.

The protein belongs to the ribose 5-phosphate isomerase family. As to quaternary structure, homodimer.

The catalysed reaction is aldehydo-D-ribose 5-phosphate = D-ribulose 5-phosphate. It functions in the pathway carbohydrate degradation; pentose phosphate pathway; D-ribose 5-phosphate from D-ribulose 5-phosphate (non-oxidative stage): step 1/1. Functionally, catalyzes the reversible conversion of ribose-5-phosphate to ribulose 5-phosphate. The chain is Ribose-5-phosphate isomerase A from Methanothermobacter thermautotrophicus (strain ATCC 29096 / DSM 1053 / JCM 10044 / NBRC 100330 / Delta H) (Methanobacterium thermoautotrophicum).